Consider the following 566-residue polypeptide: MNIFKQISSLISSKLNELKQRGVINTSAENFIVEPPSNRAHGDIYTNVAMVLAKHEKKNPIEIAGILAREFKPFDEVAEVEIASPGFINMHLKIEVWHGILKQINELKTEFGTLNIGNNQAVNVEFVSANPTGPLHIGHARGAVFGDVLANLLKKVGYNVTKEYYINDAGAQIDTLIRSVYLRYKEALGEKISIEKGLYPGEYLKPIGEGLAKKYGKELRAEEDNQIIREYTLSSILELIKEDMSLLGVNHDVFTSEYELRGKIEESIKILSDKGLVYEGYLEKPKGKESENWTSRKEMLFRSTKFGDDVDRALKKEDGSWTYFASDIAYHFDKISRGFNNMIVELGSDHGGYVKRLKAVVSALSDDQAKIEVKLHNIVNFFENEKPVKMSKRSGNFLTARDVVEEVGRDITRFIMLTRKNDMVLDFDFAKVKEQSKDNPIFYVQYAHARAHSLMRNAPKELPTADPSLLKTDGELFLIKILAKWPDVVEIAARLYEPHRITFYLLEVAEAFHVLWGYGKSDLNMRFILEDNLNLTAARMFLVQALAHVIASGLSIFNIEPLKEMC.

The 'HIGH' region signature appears at 129-139 (ANPTGPLHIGH).

The protein belongs to the class-I aminoacyl-tRNA synthetase family. As to quaternary structure, monomer.

The protein resides in the cytoplasm. The catalysed reaction is tRNA(Arg) + L-arginine + ATP = L-arginyl-tRNA(Arg) + AMP + diphosphate. The chain is Arginine--tRNA ligase from Wolbachia pipientis subsp. Culex pipiens (strain wPip).